Consider the following 181-residue polypeptide: Probable nicotinate-nucleotide adenylyltransferase (181 aa).

It belongs to the NadD family.

It carries out the reaction nicotinate beta-D-ribonucleotide + ATP + H(+) = deamido-NAD(+) + diphosphate. The protein operates within cofactor biosynthesis; NAD(+) biosynthesis; deamido-NAD(+) from nicotinate D-ribonucleotide: step 1/1. Catalyzes the reversible adenylation of nicotinate mononucleotide (NaMN) to nicotinic acid adenine dinucleotide (NaAD). The polypeptide is Probable nicotinate-nucleotide adenylyltransferase (Campylobacter fetus subsp. fetus (strain 82-40)).